The following is a 336-amino-acid chain: 3-isopropylmalate dehydrogenase (336 aa).

Substrate is bound by residues Arg-87, Arg-97, Arg-121, and Asp-211. Mg(2+)-binding residues include Asp-211, Asp-235, and Asp-239. Gly-271 to Asp-283 contributes to the NAD(+) binding site.

It belongs to the isocitrate and isopropylmalate dehydrogenases family. LeuB type 2 subfamily. In terms of assembly, homodimer. It depends on Mg(2+) as a cofactor. The cofactor is Mn(2+).

It localises to the cytoplasm. It carries out the reaction (2R,3S)-3-isopropylmalate + NAD(+) = 4-methyl-2-oxopentanoate + CO2 + NADH. It functions in the pathway amino-acid biosynthesis; L-leucine biosynthesis; L-leucine from 3-methyl-2-oxobutanoate: step 3/4. Its function is as follows. Catalyzes the oxidation of 3-carboxy-2-hydroxy-4-methylpentanoate (3-isopropylmalate) to 3-carboxy-4-methyl-2-oxopentanoate. The product decarboxylates to 4-methyl-2 oxopentanoate. The protein is 3-isopropylmalate dehydrogenase of Mycolicibacterium paratuberculosis (strain ATCC BAA-968 / K-10) (Mycobacterium paratuberculosis).